Reading from the N-terminus, the 211-residue chain is Cytochrome c biogenesis ATP-binding export protein CcmA (211 aa).

Residues 1–211 (MAIHNLACVR…RMAEATSCFG (211 aa)) form the ABC transporter domain. Position 33–40 (33–40 (GSNGAGKT)) interacts with ATP.

Belongs to the ABC transporter superfamily. CcmA exporter (TC 3.A.1.107) family. The complex is composed of two ATP-binding proteins (CcmA) and two transmembrane proteins (CcmB).

It localises to the cell inner membrane. It catalyses the reaction heme b(in) + ATP + H2O = heme b(out) + ADP + phosphate + H(+). Part of the ABC transporter complex CcmAB involved in the biogenesis of c-type cytochromes; once thought to export heme, this seems not to be the case, but its exact role is uncertain. Responsible for energy coupling to the transport system. The chain is Cytochrome c biogenesis ATP-binding export protein CcmA from Sodalis glossinidius (strain morsitans).